The chain runs to 187 residues: Resolvase OPG149 (187 aa).

It belongs to the RuvC family. Poxviruses-type subfamily. The cofactor is Mg(2+).

Functionally, plays a role in DNA replication by cleaving viral DNA concatamers to yield unit-length viral genomes. The concatamer junctions contain inverted repeat sequences that can be extruded as cruciforms, yielding Holliday junctions that A22 protein cleaves. The chain is Resolvase OPG149 (OPG149) from Cynomys gunnisoni (Gunnison's prairie dog).